Here is a 160-residue protein sequence, read N- to C-terminus: Cytochrome b6-f complex subunit 4 (160 aa).

3 consecutive transmembrane segments (helical) span residues 36-56 (ILYM…GLAI), 95-115 (LLGI…PFIE), and 127-147 (PIAM…GAGA).

The protein belongs to the cytochrome b family. PetD subfamily. As to quaternary structure, the 4 large subunits of the cytochrome b6-f complex are cytochrome b6, subunit IV (17 kDa polypeptide, PetD), cytochrome f and the Rieske protein, while the 4 small subunits are PetG, PetL, PetM and PetN. The complex functions as a dimer.

The protein localises to the cellular thylakoid membrane. In terms of biological role, component of the cytochrome b6-f complex, which mediates electron transfer between photosystem II (PSII) and photosystem I (PSI), cyclic electron flow around PSI, and state transitions. The protein is Cytochrome b6-f complex subunit 4 of Synechocystis sp. (strain ATCC 27184 / PCC 6803 / Kazusa).